The primary structure comprises 621 residues: Cyclic nucleotide-gated ion channel 11 (621 aa).

At 1–43 (MNLQRRKFVRLDSTGVDGKLKSVRGRLKKVYGKMKTLENWRKT) the chain is on the cytoplasmic side. Residues 44–64 (VLLACVVALAIDPLFLFIPLI) traverse the membrane as a helical segment. The Extracellular portion of the chain corresponds to 65-76 (DSQRFCFTFDKT). The chain crosses the membrane as a helical span at residues 77–97 (LVAVVCVIRTFIDTFYVIHII). Over 98-128 (YYLITETIAPRSQASLRGEIVVHSKATLKTR) the chain is Cytoplasmic. The chain crosses the membrane as a helical span at residues 129–149 (LLFHFIVDIISVLPIPQVVVL). Over 150-162 (TLIPLSASLVSER) the chain is Extracellular. A helical membrane pass occupies residues 163–183 (ILKWIILSQYVPRIIRMYPLY). Over 184–198 (KEVTRAFGTVAESKR) the chain is Cytoplasmic. A helical transmembrane segment spans residues 199 to 219 (VGAALNFFLYMLHSYVCGAFW). Over 220–329 (YLSSIERKST…QNLETSNSAG (110 aa)) the chain is Extracellular. Residues 330–350 (EIFFAIIICVSGLLLFAVLIG) traverse the membrane as a helical segment. The Cytoplasmic segment spans residues 351–621 (NVQKYLQSST…KLNLGAAIYA (271 aa)). A nucleoside 3',5'-cyclic phosphate-binding positions include 435 to 556 (LLQA…HSKQ) and Asp506. The calmodulin-binding stretch occupies residues 549 to 564 (YRRLHSKQLQHMFRFY). The region spanning 569–598 (QTWAACFIQAAWKRHCRRKLSKALREEEGK) is the IQ domain.

Belongs to the cyclic nucleotide-gated cation channel (TC 1.A.1.5) family. Homotetramer or heterotetramer.

It localises to the cell membrane. In terms of biological role, putative cyclic nucleotide-gated ion channel. The chain is Cyclic nucleotide-gated ion channel 11 (CNGC11) from Arabidopsis thaliana (Mouse-ear cress).